Consider the following 515-residue polypeptide: 2,3-bisphosphoglycerate-independent phosphoglycerate mutase 1 (515 aa).

Residues Asp-14 and Ser-64 each coordinate Mn(2+). Ser-64 functions as the Phosphoserine intermediate in the catalytic mechanism. Residues His-125, 155 to 156 (RD), Arg-187, Arg-193, 264 to 267 (RADR), and Lys-337 each bind substrate. Positions 404, 408, 445, 446, and 464 each coordinate Mn(2+).

It belongs to the BPG-independent phosphoglycerate mutase family. Mn(2+) is required as a cofactor.

It carries out the reaction (2R)-2-phosphoglycerate = (2R)-3-phosphoglycerate. It functions in the pathway carbohydrate degradation; glycolysis; pyruvate from D-glyceraldehyde 3-phosphate: step 3/5. Its function is as follows. Catalyzes the interconversion of 2-phosphoglycerate and 3-phosphoglycerate. The protein is 2,3-bisphosphoglycerate-independent phosphoglycerate mutase 1 of Methanosarcina acetivorans (strain ATCC 35395 / DSM 2834 / JCM 12185 / C2A).